The following is a 438-amino-acid chain: UDP-N-acetylmuramoylalanine--D-glutamate ligase (438 aa).

112 to 118 (GSNGKST) is a binding site for ATP.

This sequence belongs to the MurCDEF family.

The protein resides in the cytoplasm. The enzyme catalyses UDP-N-acetyl-alpha-D-muramoyl-L-alanine + D-glutamate + ATP = UDP-N-acetyl-alpha-D-muramoyl-L-alanyl-D-glutamate + ADP + phosphate + H(+). Its pathway is cell wall biogenesis; peptidoglycan biosynthesis. Cell wall formation. Catalyzes the addition of glutamate to the nucleotide precursor UDP-N-acetylmuramoyl-L-alanine (UMA). This is UDP-N-acetylmuramoylalanine--D-glutamate ligase from Sodalis glossinidius (strain morsitans).